The primary structure comprises 384 residues: Potassium channel subfamily K member 18 (384 aa).

At 1–23 the chain is on the cytoplasmic side; the sequence is MEVSGHPQARRCCPEALGKLFPG. A helical transmembrane segment spans residues 24–44; sequence LCFLCFLVTYALVGAVVFSAI. A glycan (N-linked (GlcNAc...) asparagine) is linked at asparagine 70. Residues 103–129 constitute an intramembrane region (pore-forming); that stretch reads FLSSLFFCCTVFSTVGYGYIYPVTRLG. K(+) contacts are provided by threonine 116, valine 117, glycine 118, and tyrosine 119. Residues 116-121 are selectivity filter 1; sequence TVGYGY. The helical transmembrane segment at 130-148 threads the bilayer; sequence KYLCMLYALFGIPLMFLVL. Residues 149–280 lie on the Cytoplasmic side of the membrane; that stretch reads TDTGDILATI…EVGQQVERLD (132 aa). Residues 200–205 form an interaction with calcineurin region; sequence PQIIIS. The interaction with YWHAH stretch occupies residues 249 to 254; sequence RSNSCP. Phosphoserine is present on residues serine 252 and serine 264. The helical transmembrane segment at 281 to 301 threads the bilayer; sequence IPLPIIALIVFAYISCAAAIL. An intramembrane region (pore-forming) is located at residues 314 to 328; the sequence is FYFCFVTLTTIGFGD. The selectivity filter 2 stretch occupies residues 323-328; sequence TIGFGD. The chain crosses the membrane as a helical span at residues 335–355; it reads NFFLFFSIYIIVGMEIVFIAF. Over 356–384 the chain is Cytoplasmic; that stretch reads KLVQNRLIDIYKNVMLFFAKGKFYHLVKK.

Belongs to the two pore domain potassium channel (TC 1.A.1.8) family. In terms of assembly, homodimer. Heterodimer with KCNK2. Heterodimer with KCNK10. Interacts with calcineurin. Interacts with YWHAH, in a phosphorylation-dependent manner. N-glycosylated. In terms of processing, phosphorylation of Ser-264 is required for the binding of 14-3-3eta/YWHAH. Calcineurin-mediated dephosphorylation enhances channel activity. In terms of tissue distribution, expressed in dorsal root ganglion and trigeminal ganglion neurons. Detected at low levels in spinal cord. Expressed in regulatory T cells (at protein level).

It localises to the cell membrane. The catalysed reaction is K(+)(in) = K(+)(out). With respect to regulation, activated by volatile anesthetics but inhibited by amide local anesthetics. Inhibited by Ba(2+) ions. Inhibited by free polyunsaturated fatty acids. Channel conductance is sensitive to intracellular pH, it decreases at acidic pH and increases at basic pH. In contrast to its mouse ortholog, it is not regulated by extracellular protons. Insensitive to changes in temperature. Its function is as follows. K(+) channel that conducts outward and inward rectifying currents at depolarized and hyperpolarized membrane potentials, respectively. The outward rectifying currents are voltage-dependent, coupled to K(+) electrochemical gradient across the membrane, whereas the inward currents can be induced in response to activation of Ca(2+)-mobilizing receptors. Homo- and heterodimerizes to form functional channels with distinct regulatory and gating properties. In trigeminal ganglia sensory neurons, the heterodimers of KCNK18/TRESK and KCNK2/TREK-1 or KCNK10/TREK-2 inhibit neuronal firing and neurogenic inflammation by stabilizing the resting membrane potential at K(+) equilibrium potential as well as by regulating the threshold of action potentials and the spike frequency. In thymocytes, conducts K(+) currents upon T cell receptor (TCR) signaling leading to sustained Ca(2+) influx and NF-kappa-B activation, FOXP3 transcription and positive selection of regulatory T cell (Treg) progenitor subsets. Appears to mediate the analgesics effects of hydroxy-alpha-sanshool, a metabolite naturally present in Schezuan pepper and other Xanthoxylum plants. This is Potassium channel subfamily K member 18 from Homo sapiens (Human).